Here is a 707-residue protein sequence, read N- to C-terminus: SEC14-like protein 5 (707 aa).

The PRELI/MSF1 domain maps to 3–175 (QKYQSPVRVY…YLNELISQGI (173 aa)). The segment covering 201–211 (RSNQAEQTASQ) has biased composition (polar residues). The interval 201 to 232 (RSNQAEQTASQGPCKADAGSHSLAAEPSTPDT) is disordered. The CRAL-TRIO domain maps to 315–491 (PPRVLEEYYA…FLGGECVCNI (177 aa)). The GOLD domain maps to 518-667 (TETIYQSSCV…KCKLMYYFEV (150 aa)). Polar residues predominate over residues 686–695 (FSQLSGVTNT). Residues 686-707 (FSQLSGVTNTSSKSHSSSLISR) form a disordered region. Over residues 696 to 707 (SSKSHSSSLISR) the composition is skewed to low complexity.

The polypeptide is SEC14-like protein 5 (sec14l1) (Xenopus tropicalis (Western clawed frog)).